The chain runs to 514 residues: Importin subunit alpha-3 (514 aa).

The region spanning Met1–Asp51 is the IBB domain. A disordered region spans residues Met1 to Phe62. The span at Asn12–Ser39 shows a compositional bias: basic and acidic residues. 8 ARM repeats span residues Ile101–Gln142, Thr143–Tyr187, Cys188–Pro226, Ala227–Gln271, Met272–Gln311, Thr312–Gln353, Val354–Arg393, and Pro394–Gly436. Residues Gly485–Lys514 are disordered.

The protein belongs to the importin alpha family. In terms of assembly, forms a complex with an importin beta subunit. May interact with transcription factor cebp-1 (via N-terminus). Interacts with cmk-1; affinity for cmk-1 is increased in the presence of Ca(2+) and calmodulin and leads to increased nuclear accumulation of cmk-1 in FLP neurons upon prolonged heat activation. Expressed in larval and adult germline and somatic tissues, including neurons.

Its subcellular location is the cytoplasm. It localises to the nucleus. In terms of biological role, binds specifically and directly to substrates containing either a simple or bipartite NLS motif. Promotes docking of import substrates to the nuclear envelope. Seems to act as a cytosolic receptor for both simple and bipartite NLS motifs. Necessary for correct nucleoporin localization within the germline. Essential gene for embryonic and larval development. May be dispensable for axon development, but required for axon regeneration in both mechanosensory and motor neurons. Required for oogenic development, ima-1 and ima-2 cannot functionally compensate for loss of ima-3. In Caenorhabditis elegans, this protein is Importin subunit alpha-3 (ima-3).